A 492-amino-acid polypeptide reads, in one-letter code: Peptidyl-prolyl cis-trans isomerase-like 4 (492 aa).

One can recognise a PPIase cyclophilin-type domain in the interval 1 to 161; it reads MAVLLETTLG…QDIRINHTVI (161 aa). Residues 167–188 are disordered; it reads DDPPDLLIPDRSPEPTREQLDS. Over residues 177 to 187 the composition is skewed to basic and acidic residues; it reads RSPEPTREQLD. A Phosphoserine modification is found at Ser-178. Thr-182 bears the Phosphothreonine mark. Glycyl lysine isopeptide (Lys-Gly) (interchain with G-Cter in SUMO2) cross-links involve residues Lys-201, Lys-212, and Lys-218. The 79-residue stretch at 240–318 folds into the RRM domain; it reads NVLFVCKLNP…RRIHVDFSQS (79 aa). Glycyl lysine isopeptide (Lys-Gly) (interchain with G-Cter in SUMO2) cross-links involve residues Lys-321 and Lys-362. Disordered regions lie at residues 368–406 and 423–492; these read DEQAEDSKSSHSHTSKKHKKKTHHCSEEKEDEDYMPIKN and EESC…SKYR. Basic residues predominate over residues 377–390; that stretch reads SHSHTSKKHKKKTH. At Ser-393 the chain carries Phosphoserine. A Glycyl lysine isopeptide (Lys-Gly) (interchain with G-Cter in SUMO2) cross-link involves residue Lys-405. Residues 426–452 show a composition bias toward basic and acidic residues; it reads CWEKQKSEKRDRTQNRSRSRSRERDGH. Residue Lys-460 forms a Glycyl lysine isopeptide (Lys-Gly) (interchain with G-Cter in SUMO2) linkage. Ser-471 bears the Phosphoserine mark. Residues 482-492 are compositionally biased toward basic and acidic residues; sequence KSKDKEKSKYR.

This sequence belongs to the cyclophilin-type PPIase family. PPIL4 subfamily. In terms of tissue distribution, abundantly expressed in kidney but has a ubiquitously low expression pattern in other adult tissues.

Its subcellular location is the nucleus. The enzyme catalyses [protein]-peptidylproline (omega=180) = [protein]-peptidylproline (omega=0). Functionally, PPIases accelerate the folding of proteins. It catalyzes the cis-trans isomerization of proline imidic peptide bonds in oligopeptides. This Homo sapiens (Human) protein is Peptidyl-prolyl cis-trans isomerase-like 4 (PPIL4).